A 134-amino-acid chain; its full sequence is Large ribosomal subunit protein bL17 (134 aa).

This sequence belongs to the bacterial ribosomal protein bL17 family. As to quaternary structure, part of the 50S ribosomal subunit. Contacts protein L32.

This Paracidovorax citrulli (strain AAC00-1) (Acidovorax citrulli) protein is Large ribosomal subunit protein bL17.